Reading from the N-terminus, the 89-residue chain is Small ribosomal subunit protein uS14 (89 aa).

Belongs to the universal ribosomal protein uS14 family. Part of the 30S ribosomal subunit. Contacts proteins S3 and S10.

Binds 16S rRNA, required for the assembly of 30S particles and may also be responsible for determining the conformation of the 16S rRNA at the A site. The chain is Small ribosomal subunit protein uS14 from Flavobacterium psychrophilum (strain ATCC 49511 / DSM 21280 / CIP 103535 / JIP02/86).